Consider the following 1331-residue polypeptide: MYADATHPRRACWCGAGGVSGCVRQRHAYRCSRLLAGVLLIVGALTLTLAVSTVPAAWAAGAVASSDEPVYLLNAMYSLSDYNAKHAKALWLGIDSALHAVGYTAARGRPIKIIEPDPTDDLSDIVAVVLKALKDYPTLLGVIGPYSDTRLGAVLISPEIQNSGLMFLGPFTGSSSMRAWNENLYFMRAEPRLEIMAMVKHIANTFRARRTAFMYLTGEQYGSFEHKSLVELMTSLSLDPPAVYSASYSTSTAVNMTAFDAMADTRPQVIIIWGIPAGQVEELLKVVLTDPRTSSAYIMPSFALQQMTFQVYYDLAMAGKLTPVDGQIISSATSFPLTEPASVHLRVFRAQMGEYMVKTGRVDASLWADEAKAVQQYGPWEHEASSSDSAAYVNNFFNEHPCVTQLMIAGWISGSLIAQTLAEENRIANRTAYRQYMFSQQRYIVGEDFVLGDYGGPCNGVAEFLGAVCYCNQGGHSAVLSRLDRAVWTVITESGVSFTQKNCYSDGTTLPRPLNFLTLIFAEHPLLAQVGLTFKTSISTLVAYLQYNASPVNAATVNVTDTTPQALHDAVTTNYTTDVVVGVTVKGMNVDGYLVPSPIHPRPHLVELLRNYVYLMPTLEQQMFVLYAKLSAVRGVTSIDSAVHMILHGYASDEVANITAVLRKSAATFNYDNPTVTAVPSTKTVGSALAHGQINFVLAVTAADVADIVDFLVEEKTSIVVIVFDDLVIQYPTLVTALKSKPASVQARVITFTNLPLWSDTSESAHAASKLLTVFHDALPDPSQHTPGFLSAVLTGSFCASMRRLADSVHSTSLTDMVYREGSVTTFAEPFGRFQWGCTTTPTDRFCVYHNYGAQGIVMLSVQRMLDPTVPQLSSPMTPTMDYRPRQRSHALTPAQRGGAIAGIALLTVILLAVAGLALYCCMDNRNNDAAPKDGDEPVTLLFTDIESSTALWAALPQLMSDAIAAHHRVIRQLVKKYGCYEVKTIGDSFMIACRSAHSAVSLACEIQTKLLKHDWGTEALDRAYREFELARVDTLDDYEPPTARLSEEEYAALWCGLRVRVGIHTGLTDIRYDEVTRGYDYYGDTSNMAARTEAVANGGQVVATEAAWWALSNDERAGIAHTAMGPQGLRGVPFAVEMFQLNAVPGRRHAALRTEIEAILPDDTATDTASSAAGALLSSVGTINGPAAGIAFVLASCFAPYPVAQRVRELQPLLSKWGVGAPPRSRLVSEEDYCQGLMNRLAIRIATVSQARCPVGNNGAAVDLDVQHAGTAEVMNPLLGEGSFISDGARARHSGLTAVPPSAEPSAMRMRRVGRKVPERPTVCNVRGAH.

Residues 1–33 (MYADATHPRRACWCGAGGVSGCVRQRHAYRCSR) lie on the Cytoplasmic side of the membrane. Residues 34 to 54 (LLAGVLLIVGALTLTLAVSTV) form a helical membrane-spanning segment. Residues 55–898 (PAAWAAGAVA…SHALTPAQRG (844 aa)) are Extracellular-facing. N-linked (GlcNAc...) asparagine glycosylation is found at Asn-255, Asn-429, Asn-558, Asn-574, and Asn-657. Residues 899 to 919 (GAIAGIALLTVILLAVAGLAL) traverse the membrane as a helical segment. Over 920-1331 (YCCMDNRNND…PTVCNVRGAH (412 aa)) the chain is Cytoplasmic. Residues 940–1094 (TLLFTDIESS…DTSNMAARTE (155 aa)) form the Guanylate cyclase domain. 2 residues coordinate Mg(2+): Asp-945 and Asp-988.

It belongs to the adenylyl cyclase class-3 family. Mg(2+) serves as cofactor.

It is found in the membrane. The catalysed reaction is ATP = 3',5'-cyclic AMP + diphosphate. Could act as a receptor for an unknown ligand. This Leishmania donovani protein is Receptor-type adenylate cyclase B (RAC-B).